A 248-amino-acid chain; its full sequence is DNA/RNA-binding protein ALBA1 (248 aa).

Residues 217-248 form a disordered region; the sequence is GRDGGYRGGNRGGSRSGFRGGRGGFRGGRALS. Gly residues predominate over residues 222-248; the sequence is YRGGNRGGSRSGFRGGRGGFRGGRALS.

It belongs to the histone-like Alba family. May form homodimers. Identified in a TARE6-associated complex consisting of over 30 proteins and including ALBA1, ALBA2 and ALBA4; the complex binds to the non-coding subtelomeric repeat region TARE6.

It localises to the nucleus. Its subcellular location is the chromosome. The protein resides in the telomere. It is found in the cytoplasm. Functionally, possesses DNA- and RNA-binding activities. During the asexual blood stages binds to a sub-population of mature mRNAs and regulates the timing of their translation. Binds to DNA with relaxed sequence specificity. Associates with the subtelomeric TARE6 repeats. This chain is DNA/RNA-binding protein ALBA1, found in Plasmodium falciparum (isolate 3D7).